Consider the following 131-residue polypeptide: Profilin-4 (131 aa).

Cysteine 13 and cysteine 115 are disulfide-bonded. The short motif at 81-97 (AVIRGKKGAGGITIKKT) is the Involved in PIP2 interaction element. A Phosphothreonine modification is found at threonine 111.

It belongs to the profilin family. As to quaternary structure, occurs in many kinds of cells as a complex with monomeric actin in a 1:1 ratio. Post-translationally, phosphorylated by MAP kinases.

The protein localises to the cytoplasm. It localises to the cytoskeleton. Its function is as follows. Binds to actin and affects the structure of the cytoskeleton. At high concentrations, profilin prevents the polymerization of actin, whereas it enhances it at low concentrations. The sequence is that of Profilin-4 from Phleum pratense (Common timothy).